A 727-amino-acid polypeptide reads, in one-letter code: ATP-dependent RNA helicase Ddx1 (727 aa).

The Helicase ATP-binding domain maps to Thr-2 to Trp-428. ATP is bound at residue Ala-46–Thr-53. The 178-residue stretch at Arg-69–Phe-246 folds into the B30.2/SPRY domain. The DEAD box motif lies at Asp-370 to Asp-373. A Helicase C-terminal domain is found at Thr-483–Val-676.

It belongs to the DEAD box helicase family. DDX1 subfamily.

It carries out the reaction ATP + H2O = ADP + phosphate + H(+). In terms of biological role, acts as an ATP-dependent RNA helicase, able to unwind both RNA-RNA and RNA-DNA duplexes. Possesses 5' single-stranded RNA overhang nuclease activity. The chain is ATP-dependent RNA helicase Ddx1 (Ddx1) from Drosophila melanogaster (Fruit fly).